The sequence spans 199 residues: Golgi to ER traffic protein 1 (199 aa).

The Lumenal segment spans residues 1 to 11; sequence MLLPDLHPYTI. A helical transmembrane segment spans residues 12 to 31; sequence LLSIFLVLVVKQLVATIGKS. Residues 32–115 are Cytoplasmic-facing; the sequence is TIQEFVWLVY…SIDKASNALI (84 aa). Residues 76–116 are a coiled coil; it reads YAKWTKLNRQADKLSAELQKLNQEIQQQKSSIDKASNALIL. The chain crosses the membrane as a helical span at residues 116 to 136; the sequence is LVLTTLPIWIARVFYRKTHLF. Residues 137 to 160 lie on the Lumenal side of the membrane; the sequence is YIRQGIFPKYVEWVLALPFLPNGA. A helical transmembrane segment spans residues 161–177; it reads VGLTIWMFAVNSVVSNF. Residues 178 to 199 lie on the Cytoplasmic side of the membrane; the sequence is SFLVSFPFAKRVSKPVRDTKVE.

Belongs to the WRB/GET1 family. In terms of assembly, component of the Golgi to ER traffic (GET) complex, which is composed of GET1, GET2 and GET3. Within the complex, GET1 and GET2 form a heterotetramer which is stabilized by phosphatidylinositol binding and which binds to the GET3 homodimer.

It is found in the endoplasmic reticulum membrane. The protein resides in the golgi apparatus membrane. In terms of biological role, required for the post-translational delivery of tail-anchored (TA) proteins to the endoplasmic reticulum. Together with GET2, acts as a membrane receptor for soluble GET3, which recognizes and selectively binds the transmembrane domain of TA proteins in the cytosol. The GET complex cooperates with the HDEL receptor ERD2 to mediate the ATP-dependent retrieval of resident ER proteins that contain a C-terminal H-D-E-L retention signal from the Golgi to the ER. In Candida albicans (strain WO-1) (Yeast), this protein is Golgi to ER traffic protein 1.